Reading from the N-terminus, the 121-residue chain is Nitrogenase-stabilizing/protective protein NifW (121 aa).

It belongs to the NifW family. As to quaternary structure, homotrimer; associates with NifD.

Functionally, may protect the nitrogenase Fe-Mo protein from oxidative damage. The chain is Nitrogenase-stabilizing/protective protein NifW from Leptothrix cholodnii (strain ATCC 51168 / LMG 8142 / SP-6) (Leptothrix discophora (strain SP-6)).